Consider the following 340-residue polypeptide: Acidic endochitinase WIN6 (340 aa).

The N-terminal stretch at 1–22 (MSVWALFAFFSLFLSLSVRGSA) is a signal peptide. The Chitin-binding type-1 domain maps to 23 to 63 (EQCGRQAGDALCPGGLCCSSYGWCGTTVDYCGIGCQSQCDG). Intrachain disulfides connect cysteine 25–cysteine 40, cysteine 34–cysteine 46, cysteine 39–cysteine 53, and cysteine 57–cysteine 61. A spacer region spans residues 64–85 (GGGGDGGDDGCDGGDDGGGDGD). A chitinase region spans residues 86–340 (DGYLSDIIPK…YGLSGLKDTM (255 aa)). Cystine bridges form between cysteine 110/cysteine 172, cysteine 183/cysteine 191, and cysteine 290/cysteine 323. Catalysis depends on glutamate 154, which acts as the Proton donor.

The protein belongs to the glycosyl hydrolase 19 family. Chitinase class I subfamily.

The catalysed reaction is Random endo-hydrolysis of N-acetyl-beta-D-glucosaminide (1-&gt;4)-beta-linkages in chitin and chitodextrins.. In terms of biological role, defense against chitin-containing fungal pathogens. This chain is Acidic endochitinase WIN6 (WIN6), found in Populus trichocarpa (Western balsam poplar).